Reading from the N-terminus, the 1800-residue chain is U3 small nucleolar RNA-associated protein 10 (1800 aa).

2 HEAT repeats span residues 426-467 (FTQS…TTPA) and 581-619 (DVDL…LYKK). 2 helical membrane passes run 944-964 (IQSG…AIVN) and 1000-1020 (ALLL…HSVM). HEAT repeat units lie at residues 1043–1081 (DQTI…AFEH), 1250–1288 (TLSL…QNPE), 1294–1333 (QHRM…KYGR), and 1755–1793 (LALL…VLGE).

It belongs to the HEATR1/UTP10 family. In terms of assembly, component of the ribosomal small subunit (SSU) processome.

The protein resides in the nucleus. It localises to the nucleolus. Its subcellular location is the membrane. In terms of biological role, involved in nucleolar processing of pre-18S ribosomal RNA. Involved in ribosome biosynthesis. This Aspergillus niger (strain ATCC MYA-4892 / CBS 513.88 / FGSC A1513) protein is U3 small nucleolar RNA-associated protein 10.